Here is a 117-residue protein sequence, read N- to C-terminus: Large ribosomal subunit protein bL19 (117 aa).

This sequence belongs to the bacterial ribosomal protein bL19 family.

In terms of biological role, this protein is located at the 30S-50S ribosomal subunit interface and may play a role in the structure and function of the aminoacyl-tRNA binding site. In Blochmanniella floridana, this protein is Large ribosomal subunit protein bL19.